A 124-amino-acid polypeptide reads, in one-letter code: Small ribosomal subunit protein uS12cz/uS12cy (124 aa).

It belongs to the universal ribosomal protein uS12 family. As to quaternary structure, part of the 30S ribosomal subunit.

It localises to the plastid. In terms of biological role, with S4 and S5 plays an important role in translational accuracy. Located at the interface of the 30S and 50S subunits. This chain is Small ribosomal subunit protein uS12cz/uS12cy (rps12-A), found in Epifagus virginiana (Beechdrops).